Here is a 597-residue protein sequence, read N- to C-terminus: Bromodomain-containing protein 9 (597 aa).

Residues M1–A10 are compositionally biased toward basic residues. Disordered regions lie at residues M1–E25 and E38–S138. Basic and acidic residues-rich tracts occupy residues E11–E25 and S50–R62. The residue at position 56 (S56) is a Phosphoserine. Over residues H63–K73 the composition is skewed to basic residues. Basic and acidic residues predominate over residues S74 to R85. The span at R86–E97 shows a compositional bias: basic residues. Over residues D111 to V126 the composition is skewed to basic and acidic residues. Positions N136–Q240 constitute a Bromo domain. The segment at T214–N216 is histone H4K5ac H4K8ac and histone H4K5bu H4K8bu binding. The residue at position 373 (K373) is an N6-acetyllysine; alternate. Residue K373 forms a Glycyl lysine isopeptide (Lys-Gly) (interchain with G-Cter in SUMO2); alternate linkage. The disordered stretch occupies residues E536–T597. Over residues S544 to A556 the composition is skewed to low complexity. A phosphoserine mark is found at S566 and S588.

Binds acetylated histones H3 and H4. Binds butyrylated histone H4. Component of the multiprotein chromatin-remodeling subcomplex SWI/SNF called GBAF, which includes at least BICRA or BICRAL (mutually exclusive), BRD9, SS18, the core BAF subunits, SMARCA2/BRM, SMARCA4/BRG1/BAF190A, ACTL6A/BAF53, SMARCC1/BAF155, and SMARCD1/BAF60A. Interacts (via N-terminal bromodomain) with acetylated RAD54. Interacts (via C-terminus) with RAD51.

It localises to the nucleus. In terms of biological role, plays a role in chromatin remodeling and regulation of transcription. Acts as a chromatin reader that recognizes and binds acylated histones: binds histones that are acetylated and/or butyrylated. Component of SWI/SNF chromatin remodeling subcomplex GBAF that carries out key enzymatic activities, changing chromatin structure by altering DNA-histone contacts within a nucleosome in an ATP-dependent manner. Also orchestrates the RAD51-RAD54 complex formation and thereby plays a role in homologous recombination (HR). This chain is Bromodomain-containing protein 9 (BRD9), found in Homo sapiens (Human).